The sequence spans 152 residues: Small ribosomal subunit protein uS13z/uS13y/uS13x (152 aa).

S2 bears the N-acetylserine mark.

It belongs to the universal ribosomal protein uS13 family.

It localises to the cytoplasm. In terms of biological role, located at the top of the head of the 40S subunit, it contacts several helices of the 18S rRNA. This Arabidopsis thaliana (Mouse-ear cress) protein is Small ribosomal subunit protein uS13z/uS13y/uS13x (RPS18A).